The sequence spans 127 residues: MSVPHLVYVALGGALGAVSRYLIVAWVSNVAGAKFPWGTLAVNLLGSFLLGTAFVYVVEKLHGQPELRSLIMVGFLGALTTFSTFSLEAWSLMQSDQLLQGLAYILMSVILCLFAVSAGIALTRLIL.

4 helical membrane-spanning segments follow: residues 7–27, 38–58, 70–90, and 102–122; these read VYVA…VAWV, GTLA…VYVV, LIMV…LEAW, and LAYI…GIAL. Gly-77 and Thr-80 together coordinate Na(+).

The protein belongs to the fluoride channel Fluc/FEX (TC 1.A.43) family.

The protein resides in the cell inner membrane. It catalyses the reaction fluoride(in) = fluoride(out). Its activity is regulated as follows. Na(+) is not transported, but it plays an essential structural role and its presence is essential for fluoride channel function. In terms of biological role, fluoride-specific ion channel. Important for reducing fluoride concentration in the cell, thus reducing its toxicity. The polypeptide is Fluoride-specific ion channel FluC (Hahella chejuensis (strain KCTC 2396)).